Reading from the N-terminus, the 421-residue chain is Replication factor C large subunit (421 aa).

G63 to T70 is a binding site for ATP.

This sequence belongs to the activator 1 small subunits family. RfcL subfamily. In terms of assembly, heteromultimer composed of small subunits (RfcS) and large subunits (RfcL).

Functionally, part of the RFC clamp loader complex which loads the PCNA sliding clamp onto DNA. The polypeptide is Replication factor C large subunit (Pyrobaculum calidifontis (strain DSM 21063 / JCM 11548 / VA1)).